The chain runs to 1312 residues: AT-rich interactive domain-containing protein 4B (1312 aa).

Disordered regions lie at residues 124–166 and 266–306; these read PLTN…EDDR and KTEL…EPFP. Phosphoserine is present on residues serine 276, serine 295, and serine 296. Acidic residues predominate over residues 277-305; sequence EAEEEEEEEDDEKEKEDNSSEEEEEIEPF. In terms of domain architecture, ARID spans 306–398; it reads PEERENFLQQ…YLYGFEEYCR (93 aa). Glycyl lysine isopeptide (Lys-Gly) (interchain with G-Cter in SUMO2) cross-links involve residues lysine 429, lysine 440, and lysine 462. Disordered stretches follow at residues 458-577, 635-680, 708-894, 909-1212, and 1252-1288; these read EIER…KVQV, IKHR…EMVS, QASE…TTGF, LNNS…NRLP, and SEVA…SITA. An antigenic epitope region spans residues 465–473; it reads IKPSLGSKK. Serine 483 carries the post-translational modification Phosphoserine. Residues 483–496 are compositionally biased toward basic and acidic residues; sequence SDQEKEVNIKKPED. Residue lysine 517 forms a Glycyl lysine isopeptide (Lys-Gly) (interchain with G-Cter in SUMO2) linkage. The segment covering 532–567 has biased composition (acidic residues); sequence NKEEDEDDEEAEEEEEEEEEEEDEDDDDNNEEEEFE. One can recognise a Tudor-knot domain in the interval 572–624; that stretch reads GMKVQVRYGRGKNQKMYEASIKDSDVEGGEVLYLVHYCGWNVRYDEWIKADKI. Residues 643-656 show a composition bias toward basic and acidic residues; the sequence is NKLDKEKDKDEKYS. Residues serine 666, serine 675, and serine 717 each carry the phosphoserine modification. 2 stretches are compositionally biased toward basic and acidic residues: residues 722–754 and 778–787; these read ERGA…KEEQ and SPERLRKDIE. Positions 728 to 754 form a coiled coil; that stretch reads MDNNGKEESKIDHLTNNRNDLISKEEQ. Lysine 751 is covalently cross-linked (Glycyl lysine isopeptide (Lys-Gly) (interchain with G-Cter in SUMO2)). Phosphoserine is present on residues serine 778 and serine 790. The span at 788–799 shows a compositional bias: acidic residues; the sequence is VLSEDTDYEEDE. Threonine 793 is subject to Phosphothreonine. 4 stretches are compositionally biased toward basic and acidic residues: residues 807–816, 828–852, 909–927, and 995–1010; these read VKKDTTDKSS, CNTE…KESL, LNNS…RKDV, and KPIE…RKAE. At serine 1014 the chain carries Phosphoserine. Threonine 1026 carries the phosphothreonine modification. Residues 1028–1037 show a composition bias toward low complexity; the sequence is ESPSSVTVTE. Phosphoserine is present on serine 1029. Positions 1038 to 1047 are enriched in polar residues; the sequence is GSRQQSSVTV. The span at 1056–1065 shows a compositional bias: basic and acidic residues; the sequence is EEVRSIKSET. Residues 1087-1101 show a composition bias toward low complexity; that stretch reads SSPAGFDASVSSSSS. Residues 1130-1137 are antigenic epitope; the sequence is KKQKRSHK. Over residues 1130-1148 the composition is skewed to basic residues; it reads KKQKRSHKATVVNNKKKGK. Phosphothreonine is present on threonine 1150. Serine 1152, serine 1153, serine 1155, and serine 1159 each carry phosphoserine. Residues 1162-1191 show a composition bias toward polar residues; sequence ESITKSQPVKSVSTGMKSHSTKSPARTQSP. Residues 1196 to 1208 show a composition bias toward basic and acidic residues; that stretch reads KNGDKDPDLKEPS. A coiled-coil region spans residues 1231–1270; that stretch reads ERITILQEKLQEIRKHYLSLKSEVASIDRRRKRLKKKERE. Residues 1272–1288 show a composition bias toward low complexity; it reads AATSSSSSSPSSSSITA.

Component of a Sin3A corepressor complex consisting of SIN3A, SAP130, SUDS3/SAP45, SAP180, HDAC1 and HDAC2. Interacts with ARID4A. Interacts with AR. As to expression, highly expressed in the testis and in breast, lung, colon, pancreatic and ovarian cancers. Expressed at low levels in the thymus, prostate and ovary.

The protein resides in the nucleus. It localises to the cytoplasm. Acts as a transcriptional repressor. May function in the assembly and/or enzymatic activity of the Sin3A corepressor complex or in mediating interactions between the complex and other regulatory complexes. Plays a role in the regulation of epigenetic modifications at the PWS/AS imprinting center near the SNRPN promoter, where it might function as part of a complex with RB1 and ARID4A. Involved in spermatogenesis, together with ARID4A, where it functions as a transcriptional coactivator for AR (androgen receptor) and enhances expression of genes required for sperm maturation. Regulates expression of the tight junction protein CLDN3 in the testis, which is important for integrity of the blood-testis barrier. Plays a role in myeloid homeostasis where it regulates the histone methylation state of bone marrow cells and expression of various genes involved in hematopoiesis. May function as a leukemia suppressor. This is AT-rich interactive domain-containing protein 4B (ARID4B) from Homo sapiens (Human).